The following is a 352-amino-acid chain: SKP1-like protein 20 (352 aa).

The interval 108-167 is interaction with the F-box domain of F-box proteins; the sequence is TSAADSLQLKPLVDLTSRALARIIEGKNPEEIREIFHLPDDLTEEEKLEPLKNSMDDPRI. Disordered regions lie at residues 214–251 and 267–288; these read KAVKMSKGKKKKKKKKDQKIVSSNNIHDKESHDLRSKQ and LLSAEDDISTPNAGSEDEDIDD. Positions 216–230 are enriched in basic residues; the sequence is VKMSKGKKKKKKKKD. The segment covering 239–249 has biased composition (basic and acidic residues); sequence IHDKESHDLRS.

It belongs to the SKP1 family. As to quaternary structure, part of a SCF (SKP1-cullin-F-box) protein ligase complex. In terms of tissue distribution, expressed in young seedlings, roots, leaves, floral stems, inflorescences, and siliques.

Its subcellular location is the nucleus. Its pathway is protein modification; protein ubiquitination. Involved in ubiquitination and subsequent proteasomal degradation of target proteins. Together with CUL1, RBX1 and a F-box protein, it forms a SCF E3 ubiquitin ligase complex. The functional specificity of this complex depends on the type of F-box protein. In the SCF complex, it serves as an adapter that links the F-box protein to CUL1. This is SKP1-like protein 20 (ASK20) from Arabidopsis thaliana (Mouse-ear cress).